The following is a 229-amino-acid chain: Aldehyde oxidoreductase iron-sulfur-binding subunit PaoA (229 aa).

Residues 1–21 (MSNQGEYPEDNRVGKHEPHDL) are disordered. Residues 1-53 (MSNQGEYPEDNRVGKHEPHDLSLTRRDLIKVSAATAATAVVYPHSTLAASVPA) constitute a signal peptide (tat-type signal). Residues 9–21 (EDNRVGKHEPHDL) show a composition bias toward basic and acidic residues. Residues 61–137 (MPLTLKVNGK…GAEITTIEGL (77 aa)) form the 2Fe-2S ferredoxin-type domain. Residues Cys99, Cys104, Gly105, Cys107, Cys119, Cys158, Cys161, Cys208, and Cys210 each coordinate [2Fe-2S] cluster.

Heterotrimer composed of PaoA, PaoB and PaoC. Requires [2Fe-2S] cluster as cofactor. Post-translationally, exported by the Tat system. The position of the signal peptide cleavage has not been experimentally proven.

Its subcellular location is the periplasm. The catalysed reaction is an aldehyde + A + H2O = a carboxylate + AH2 + H(+). With respect to regulation, the complex requires PaoD for activity. Functionally, oxidizes aldehydes to the corresponding carboxylic acids with a preference for aromatic aldehydes. It might play a role in the detoxification of aldehydes to avoid cell damage. This is Aldehyde oxidoreductase iron-sulfur-binding subunit PaoA from Escherichia coli (strain K12).